Consider the following 602-residue polypeptide: Elongation factor 4 (602 aa).

Residues 7 to 188 (ENIRNFSIIA…SIIRLVPPPK (182 aa)) enclose the tr-type G domain. GTP-binding positions include 19-24 (DHGKST) and 135-138 (NKID).

It belongs to the TRAFAC class translation factor GTPase superfamily. Classic translation factor GTPase family. LepA subfamily.

It localises to the cell inner membrane. It catalyses the reaction GTP + H2O = GDP + phosphate + H(+). Functionally, required for accurate and efficient protein synthesis under certain stress conditions. May act as a fidelity factor of the translation reaction, by catalyzing a one-codon backward translocation of tRNAs on improperly translocated ribosomes. Back-translocation proceeds from a post-translocation (POST) complex to a pre-translocation (PRE) complex, thus giving elongation factor G a second chance to translocate the tRNAs correctly. Binds to ribosomes in a GTP-dependent manner. The protein is Elongation factor 4 of Chlamydia muridarum (strain MoPn / Nigg).